The following is a 279-amino-acid chain: Putative pyruvate, phosphate dikinase regulatory protein (279 aa).

Glycine 153–threonine 160 is a binding site for ADP.

Belongs to the pyruvate, phosphate/water dikinase regulatory protein family. PDRP subfamily.

The enzyme catalyses N(tele)-phospho-L-histidyl/L-threonyl-[pyruvate, phosphate dikinase] + ADP = N(tele)-phospho-L-histidyl/O-phospho-L-threonyl-[pyruvate, phosphate dikinase] + AMP + H(+). It catalyses the reaction N(tele)-phospho-L-histidyl/O-phospho-L-threonyl-[pyruvate, phosphate dikinase] + phosphate + H(+) = N(tele)-phospho-L-histidyl/L-threonyl-[pyruvate, phosphate dikinase] + diphosphate. Bifunctional serine/threonine kinase and phosphorylase involved in the regulation of the pyruvate, phosphate dikinase (PPDK) by catalyzing its phosphorylation/dephosphorylation. The chain is Putative pyruvate, phosphate dikinase regulatory protein from Rhodopseudomonas palustris (strain BisB5).